The sequence spans 818 residues: Probable helicase MAGATAMA 3 (818 aa).

The UvrD-like helicase ATP-binding domain occupies 259–559 (NKSQKEAIDV…KMLKTQYRMH (301 aa)). 280–287 (GPPGTGKT) lines the ATP pocket. 2 stretches are compositionally biased toward acidic residues: residues 781 to 790 (PDAPLYEDES) and 798 to 818 (GDDD…AGED). Residues 781–818 (PDAPLYEDESLPVAPYGGDDDFGDGDADQDDVAMAGED) form a disordered region.

It belongs to the helicase family. Expressed in flowers, siliques, leaves, roots and shoot apex.

The protein localises to the nucleus. In terms of biological role, probable helicase that may regulate RNA molecules involved in nucleolar organization and pollen tube guidance. In Arabidopsis thaliana (Mouse-ear cress), this protein is Probable helicase MAGATAMA 3 (MAA3).